The following is a 122-amino-acid chain: Large ribosomal subunit protein uL14 (122 aa).

Belongs to the universal ribosomal protein uL14 family. As to quaternary structure, part of the 50S ribosomal subunit. Forms a cluster with proteins L3 and L19. In the 70S ribosome, L14 and L19 interact and together make contacts with the 16S rRNA in bridges B5 and B8.

Binds to 23S rRNA. Forms part of two intersubunit bridges in the 70S ribosome. In Amoebophilus asiaticus (strain 5a2), this protein is Large ribosomal subunit protein uL14.